The chain runs to 234 residues: Sugar fermentation stimulation protein homolog (234 aa).

This sequence belongs to the SfsA family.

In Bartonella quintana (strain Toulouse) (Rochalimaea quintana), this protein is Sugar fermentation stimulation protein homolog.